The sequence spans 510 residues: ATP synthase subunit alpha (510 aa).

Position 169 to 176 (169 to 176 (GDRQTGKT)) interacts with ATP.

Belongs to the ATPase alpha/beta chains family. F-type ATPases have 2 components, CF(1) - the catalytic core - and CF(0) - the membrane proton channel. CF(1) has five subunits: alpha(3), beta(3), gamma(1), delta(1), epsilon(1). CF(0) has four main subunits: a(1), b(1), b'(1) and c(9-12).

It localises to the cell inner membrane. It catalyses the reaction ATP + H2O + 4 H(+)(in) = ADP + phosphate + 5 H(+)(out). Its function is as follows. Produces ATP from ADP in the presence of a proton gradient across the membrane. The alpha chain is a regulatory subunit. This is ATP synthase subunit alpha from Rhodopseudomonas palustris (strain BisB5).